The sequence spans 345 residues: D-fructose 1,6-bisphosphatase class 2/sedoheptulose 1,7-bisphosphatase (345 aa).

Positions 33, 57, 97, and 100 each coordinate Mn(2+). Substrate is bound by residues 100 to 102, Tyr131, 176 to 178, and 198 to 200; these read EGT, RPR, and DGD. Glu225 serves as a coordination point for Mn(2+).

The protein belongs to the FBPase class 2 family. Homotetramer. It depends on Mn(2+) as a cofactor.

The catalysed reaction is beta-D-fructose 1,6-bisphosphate + H2O = beta-D-fructose 6-phosphate + phosphate. The enzyme catalyses D-sedoheptulose 1,7-bisphosphate + H2O = D-sedoheptulose 7-phosphate + phosphate. The protein operates within carbohydrate biosynthesis; Calvin cycle. In terms of biological role, catalyzes the hydrolysis of fructose 1,6-bisphosphate (Fru 1,6-P2) and sedoheptulose 1,7-bisphosphate (Sed 1,7-P2) to fructose 6-phosphate and sedoheptulose 7-phosphate, respectively. The chain is D-fructose 1,6-bisphosphatase class 2/sedoheptulose 1,7-bisphosphatase from Crocosphaera subtropica (strain ATCC 51142 / BH68) (Cyanothece sp. (strain ATCC 51142)).